Reading from the N-terminus, the 66-residue chain is Probable Sec-independent protein translocase protein TatE (66 aa).

The chain crosses the membrane as a helical span at residues 1 to 21 (MEGISITKLLVIAVLIVLLFG). Residues 46 to 66 (ETPAAKKSDGAEAAPRVENKE) are disordered.

The protein belongs to the TatA/E family. TatE subfamily.

Its subcellular location is the cell inner membrane. Its function is as follows. Part of the twin-arginine translocation (Tat) system that transports large folded proteins containing a characteristic twin-arginine motif in their signal peptide across membranes. TatE shares overlapping functions with TatA. The sequence is that of Probable Sec-independent protein translocase protein TatE from Edwardsiella piscicida.